Consider the following 299-residue polypeptide: ATP phosphoribosyltransferase (299 aa).

The protein belongs to the ATP phosphoribosyltransferase family. Long subfamily. Mg(2+) serves as cofactor.

The protein resides in the cytoplasm. It catalyses the reaction 1-(5-phospho-beta-D-ribosyl)-ATP + diphosphate = 5-phospho-alpha-D-ribose 1-diphosphate + ATP. The protein operates within amino-acid biosynthesis; L-histidine biosynthesis; L-histidine from 5-phospho-alpha-D-ribose 1-diphosphate: step 1/9. With respect to regulation, feedback inhibited by histidine. In terms of biological role, catalyzes the condensation of ATP and 5-phosphoribose 1-diphosphate to form N'-(5'-phosphoribosyl)-ATP (PR-ATP). Has a crucial role in the pathway because the rate of histidine biosynthesis seems to be controlled primarily by regulation of HisG enzymatic activity. This is ATP phosphoribosyltransferase from Shewanella sp. (strain ANA-3).